The chain runs to 194 residues: Peptidyl-tRNA hydrolase (194 aa).

Position 17 (Tyr17) interacts with tRNA. The active-site Proton acceptor is the His22. The tRNA site is built by Phe68, Asn70, and Asn116.

The protein belongs to the PTH family. Monomer.

The protein localises to the cytoplasm. It carries out the reaction an N-acyl-L-alpha-aminoacyl-tRNA + H2O = an N-acyl-L-amino acid + a tRNA + H(+). Hydrolyzes ribosome-free peptidyl-tRNAs (with 1 or more amino acids incorporated), which drop off the ribosome during protein synthesis, or as a result of ribosome stalling. Functionally, catalyzes the release of premature peptidyl moieties from peptidyl-tRNA molecules trapped in stalled 50S ribosomal subunits, and thus maintains levels of free tRNAs and 50S ribosomes. The protein is Peptidyl-tRNA hydrolase of Shewanella halifaxensis (strain HAW-EB4).